The primary structure comprises 345 residues: S-adenosylmethionine:tRNA ribosyltransferase-isomerase (345 aa).

This sequence belongs to the QueA family. In terms of assembly, monomer.

The protein localises to the cytoplasm. The enzyme catalyses 7-aminomethyl-7-carbaguanosine(34) in tRNA + S-adenosyl-L-methionine = epoxyqueuosine(34) in tRNA + adenine + L-methionine + 2 H(+). Its pathway is tRNA modification; tRNA-queuosine biosynthesis. Transfers and isomerizes the ribose moiety from AdoMet to the 7-aminomethyl group of 7-deazaguanine (preQ1-tRNA) to give epoxyqueuosine (oQ-tRNA). The polypeptide is S-adenosylmethionine:tRNA ribosyltransferase-isomerase (Helicobacter pylori (strain HPAG1)).